Here is a 182-residue protein sequence, read N- to C-terminus: UPF0397 protein BCQ_2505 (182 aa).

The next 5 helical transmembrane spans lie at 9–29, 40–60, 71–91, 114–134, and 142–162; these read VVAI…GFSI, AILT…IGLI, WGIW…MGFI, ITGL…DIIV, and IVIQ…VLGL.

It belongs to the UPF0397 family.

Its subcellular location is the cell membrane. This is UPF0397 protein BCQ_2505 from Bacillus cereus (strain Q1).